Consider the following 150-residue polypeptide: Large ribosomal subunit protein eL19 (150 aa).

The interval 56–90 (RGISSGRLKERKHKRRSKGEGRKHGSRKGKSGART) is disordered.

This sequence belongs to the eukaryotic ribosomal protein eL19 family. Part of the 50S ribosomal subunit.

Binds to the 23S rRNA. The polypeptide is Large ribosomal subunit protein eL19 (Sulfolobus acidocaldarius (strain ATCC 33909 / DSM 639 / JCM 8929 / NBRC 15157 / NCIMB 11770)).